A 497-amino-acid chain; its full sequence is Sperm motility kinase Z (497 aa).

Residues Tyr28–Leu275 form the Protein kinase domain. Residues Leu34–Val42 and Lys57 contribute to the ATP site. The active-site Proton acceptor is Asp146. The UBA domain occupies Phe292–Ala332. 2 disordered regions span residues Thr383–Gln410 and Ser439–Leu460.

It belongs to the protein kinase superfamily. CAMK Ser/Thr protein kinase family. Smok subfamily.

It carries out the reaction L-seryl-[protein] + ATP = O-phospho-L-seryl-[protein] + ADP + H(+). It catalyses the reaction L-threonyl-[protein] + ATP = O-phospho-L-threonyl-[protein] + ADP + H(+). Its function is as follows. May play a role in sperm motility, especially in the regulation of flagellar function. The sequence is that of Sperm motility kinase Z (Gm4922) from Mus musculus (Mouse).